Here is a 688-residue protein sequence, read N- to C-terminus: Glycine--tRNA ligase beta subunit (688 aa).

It belongs to the class-II aminoacyl-tRNA synthetase family. Tetramer of two alpha and two beta subunits.

The protein resides in the cytoplasm. The enzyme catalyses tRNA(Gly) + glycine + ATP = glycyl-tRNA(Gly) + AMP + diphosphate. The protein is Glycine--tRNA ligase beta subunit of Shewanella sp. (strain ANA-3).